The chain runs to 76 residues: Waprin-Rha1 (76 aa).

The first 24 residues, 1–24, serve as a signal peptide directing secretion; it reads MQARVFLLLLGVILLGMMGPMVSA. In terms of domain architecture, WAP spans 25-75; the sequence is QDGKAGSCPDVNQPIPPLGVCKTTCATDSNCPDIQKCCKNGCGHMSCTRPS. Disulfide bonds link C32/C62, C45/C66, C49/C61, and C55/C71.

The protein belongs to the venom waprin family. Expressed by the venom gland.

It localises to the secreted. Its function is as follows. Damages membranes of susceptible bacteria. Has no hemolytic activity. Not toxic to mice. Does not inhibit the proteinases elastase and cathepsin G. This chain is Waprin-Rha1, found in Rhabdophis tigrinus tigrinus (Tiger keelback snake).